Here is a 377-residue protein sequence, read N- to C-terminus: MQCAHYSAGHCHSCQWLEKPYSQQLEDKQQNLKQLLPQAIVKQWLPPIASQQDAFRNKAKMVVSGSVERPLLGMLHRDGTAVDLCHCPLYPAHFQPVFDVVKSFIACAGLTPYNVARKRGELKYLLLTESRHSGEMMLRFVLRSETKIAQLERALPRLHEQLPQLTVISANIQPIHMAILEGEKEILFTEQKAFKEQFNGIPLYIRPHSFFQTNPKMASELYATAGRWVRELKISSMWDLFCGVGGFGLHCADKNTCLTGIEISSEAIDCARDSAKTLGLENIEFQALDSTHFAVAKDQIPQLVLVNPPRRGIGKVLCDYLSKMVPDYILYSSCNAQTMAKDIAALANYRVEKTQLFDMFPHTEHYEVLTLLVLNHN.

Residues C3, C11, C14, and C87 each contribute to the [4Fe-4S] cluster site. S-adenosyl-L-methionine-binding residues include Q212, F241, E262, and N307. The active-site Nucleophile is C334.

It belongs to the class I-like SAM-binding methyltransferase superfamily. RNA M5U methyltransferase family. RlmC subfamily.

It carries out the reaction uridine(747) in 23S rRNA + S-adenosyl-L-methionine = 5-methyluridine(747) in 23S rRNA + S-adenosyl-L-homocysteine + H(+). Catalyzes the formation of 5-methyl-uridine at position 747 (m5U747) in 23S rRNA. This chain is 23S rRNA (uracil(747)-C(5))-methyltransferase RlmC, found in Photorhabdus laumondii subsp. laumondii (strain DSM 15139 / CIP 105565 / TT01) (Photorhabdus luminescens subsp. laumondii).